The primary structure comprises 78 residues: Mu-conotoxin BuIIIB (78 aa).

Positions Met-1–Pro-22 are cleaved as a signal peptide. The propeptide occupies Gln-23–Arg-51. Residues Asp-26–Pro-46 form a disordered region. Positions Pro-28–Asp-38 are enriched in basic and acidic residues. 3 disulfide bridges follow: Cys-56-Cys-68, Cys-57-Cys-74, and Cys-64-Cys-75. Cys-75 carries the cysteine amide modification.

Belongs to the conotoxin M superfamily. In terms of tissue distribution, expressed by the venom duct.

The protein resides in the secreted. In terms of biological role, mu-conotoxins block voltage-gated sodium channels (Nav). This synthetic toxin potently blocks rNav1.4/SCN4A (Kd=0.34-3.6 nM), rNav1.2/SCN2A (Kd=13 nM), rNav1.3/SCN3A (Kd=200 nM), rNav1.1/SCN1A (Kd=360 nM), mNav1.6/SCN8A (IC(50)=1.8 uM), rNav1.5/SCN5A (IC(50)=9 uM), rNav1.6/SCN8A (IC(50)&gt;30 uM). It is noteworthy that the toxin is 50-fold more potent on mouse Nav1.6 than on rat Nav1.6. The block of SCN4A is very slowly reversible. This Conus bullatus (Bubble cone) protein is Mu-conotoxin BuIIIB.